A 232-amino-acid polypeptide reads, in one-letter code: V-type ATP synthase subunit E (232 aa).

This sequence belongs to the V-ATPase E subunit family.

Functionally, produces ATP from ADP in the presence of a proton gradient across the membrane. The sequence is that of V-type ATP synthase subunit E (atpE) from Treponema pallidum (strain Nichols).